Reading from the N-terminus, the 188-residue chain is Elongation factor P 1 (188 aa).

The protein belongs to the elongation factor P family.

It localises to the cytoplasm. It functions in the pathway protein biosynthesis; polypeptide chain elongation. In terms of biological role, involved in peptide bond synthesis. Stimulates efficient translation and peptide-bond synthesis on native or reconstituted 70S ribosomes in vitro. Probably functions indirectly by altering the affinity of the ribosome for aminoacyl-tRNA, thus increasing their reactivity as acceptors for peptidyl transferase. The sequence is that of Elongation factor P 1 (efp1) from Porphyromonas gingivalis (strain ATCC BAA-308 / W83).